A 478-amino-acid polypeptide reads, in one-letter code: Lipoprotein lipase (478 aa).

An N-terminal signal peptide occupies residues 1–28 (MESKALLLLALSVCLQSLTVSRGGLVAA). The tract at residues 35–56 (KDFRDIESKFALRTPEDTAEDT) is interaction with GPIHBP1. Cys-57 and Cys-70 form a disulfide bridge. N-linked (GlcNAc...) asparagine glycosylation is present at Asn-73. 3'-nitrotyrosine is present on Tyr-124. Ser-162 functions as the Nucleophile in the catalytic mechanism. Asp-186 serves as the catalytic Charge relay system. Tyr-194 bears the 3'-nitrotyrosine mark. Residues Ala-197, Arg-200, Ser-202, and Asp-205 each contribute to the Ca(2+) site. A disulfide bridge connects residues Cys-246 and Cys-269. The tract at residues 246 to 269 (CNIGEALRVIAERGLGDVDQLVKC) is essential for determining substrate specificity. The active-site Charge relay system is His-271. A glycan (N-linked (GlcNAc...) asparagine) is linked at Asn-287. 2 cysteine pairs are disulfide-bonded: Cys-294–Cys-313 and Cys-305–Cys-308. Residues 344–467 (FHYQVKIHFS…KGKSPVIFVK (124 aa)) form the PLAT domain. Position 346 is a 3'-nitrotyrosine (Tyr-346). Asn-389 carries N-linked (GlcNAc...) asparagine glycosylation. The important for interaction with lipoprotein particles stretch occupies residues 420–424 (WSNWW). The segment at 433–437 (KIRVK) is important for heparin binding. Residues 446-470 (IFCSREKMSYLQKGKSPVIFVKCHD) form an interaction with GPIHBP1 region. Residues Cys-448 and Cys-468 are joined by a disulfide bond.

The protein belongs to the AB hydrolase superfamily. Lipase family. As to quaternary structure, homodimer. Interacts with GPIHBP1 with 1:1 stoichiometry. Interacts with APOC2; the interaction activates LPL activity in the presence of lipids. Interaction with heparan sulfate proteoglycans is required to protect LPL against loss of activity. Associates with lipoprotein particles in blood plasma. Interacts with LMF1 and SEL1L; interaction with SEL1L is required to prevent aggregation of newly synthesized LPL in the endoplasmic reticulum (ER), and for normal export of LPL from the ER to the extracellular space. Interacts with SORL1; SORL1 acts as a sorting receptor, promoting LPL localization to endosomes and later to lysosomes, leading to degradation of newly synthesized LPL. Tyrosine nitration after lipopolysaccharide (LPS) challenge down-regulates the lipase activity. In terms of tissue distribution, detected in milk (at protein level).

The protein localises to the cell membrane. It is found in the secreted. Its subcellular location is the extracellular space. The protein resides in the extracellular matrix. The enzyme catalyses a triacylglycerol + H2O = a diacylglycerol + a fatty acid + H(+). It catalyses the reaction a 1,2-diacyl-sn-glycero-3-phosphocholine + H2O = a 2-acyl-sn-glycero-3-phosphocholine + a fatty acid + H(+). It carries out the reaction 1,2,3-tri-(9Z-octadecenoyl)-glycerol + H2O = di-(9Z)-octadecenoylglycerol + (9Z)-octadecenoate + H(+). The catalysed reaction is 1,2-di-(9Z-octadecenoyl)-sn-glycero-3-phosphocholine + H2O = (9Z-octadecenoyl)-sn-glycero-3-phosphocholine + (9Z)-octadecenoate + H(+). The enzyme catalyses 1,2,3-tributanoylglycerol + H2O = dibutanoylglycerol + butanoate + H(+). It catalyses the reaction 1,2-dihexadecanoyl-sn-glycero-3-phosphocholine + H2O = hexadecanoyl-sn-glycero-3-phosphocholine + hexadecanoate + H(+). Its activity is regulated as follows. The apolipoprotein APOC2 acts as a coactivator of LPL activity. Ca(2+) binding promotes protein stability and formation of the active homodimer. Interaction with GPIHBP1 protects LPL against inactivation by ANGPTL4. Its function is as follows. Key enzyme in triglyceride metabolism. Catalyzes the hydrolysis of triglycerides from circulating chylomicrons and very low density lipoproteins (VLDL), and thereby plays an important role in lipid clearance from the blood stream, lipid utilization and storage. Although it has both phospholipase and triglyceride lipase activities it is primarily a triglyceride lipase with low but detectable phospholipase activity. Mediates margination of triglyceride-rich lipoprotein particles in capillaries. Recruited to its site of action on the luminal surface of vascular endothelium by binding to GPIHBP1 and cell surface heparan sulfate proteoglycans. The polypeptide is Lipoprotein lipase (LPL) (Bos taurus (Bovine)).